A 620-amino-acid chain; its full sequence is MGVNAVHWFRKGLRLHDNPALRECIQGADTVRCVYILDPWFAGSSNVGINRWRFLLQCLEDLDANLRKLNSRLFVIRGQPADVFPRLFKEWNIAKLSIEYDSEPFGKERDAAIKKLASEAGVEVIVRISHTLYDLDKIIELNGGQPPLTYKRFQTLISRMEPLEMPVETITPEVMKKCTTPVSDDHDEKYGVPSLEELGFDTDGLPSAVWPGGETEALTRLERHLERKAWVANFERPRMNANSLLASPTGLSPYLRFGCLSCRLFYFKLTDLYKKVKKNSSPPLSLYGQLLWREFFYTAATNNPRFDKMEGNPICVQIPWDKNPEALAKWAEGRTGFPWIDAIMTQLRQEGWIHHLARHAVACFLTRGDLWISWEEGMKVFEELLLDADWSVNAGSWMWLSCSSFFQQFFHCYCPVGFGRRTDPNGDYIRRYLPVLRGFPAKYIYDPWNAPESIQKAAKCIIGVNYPKPMVNHAEASRLNIERMKQIYQQLSRYRGLGLLATVPSNPNGNGNGGLMGYSPGESISGCGSTGGAQLGAGDGHSVVQSCALGDSHTGTSGVQQQGYCQASSILHYAHGDNQQSHLLQAGRTALGTGISAGKRPNPEEETQSVGPKVQRQSTN.

Residues 3–132 (VNAVHWFRKG…EVIVRISHTL (130 aa)) enclose the Photolyase/cryptochrome alpha/beta domain. 3 short sequence motifs (LIR) span residues 50–54 (NRWRF), 82–87 (DVFPRL), and 151–156 (KRFQTL). FAD is bound at residue S252. Short sequence motifs (LIR) lie at residues 255–260 (LRFGCL), 271–276 (DLYKKV), 285–290 (SLYGQL), and 335–339 (TGFPW). Q289 is an FAD binding site. An FAD-binding site is contributed by H355. The short motif at 379–384 (KVFEEL) is the LIR 8 element. 387–389 (DAD) serves as a coordination point for FAD. 5 consecutive short sequence motifs (LIR) follow at residues 395–400 (GSWMWL), 411–416 (HCYCPV), 430–435 (RRYLPV), 486–491 (QIYQQL), and 492–497 (SRYRGL). The interval 592–620 (GTGISAGKRPNPEEETQSVGPKVQRQSTN) is disordered.

The protein belongs to the DNA photolyase class-1 family. In terms of assembly, component of the circadian core oscillator, which includes the CRY proteins, CLOCK or NPAS2, BMAL1 or BMAL2, CSNK1E, and the PER proteins. FAD is required as a cofactor. The cofactor is (6R)-5,10-methylene-5,6,7,8-tetrahydrofolate. In terms of tissue distribution, expressed in the retina. High levels found in ganglion cells of the retina.

The protein resides in the cytoplasm. Its subcellular location is the nucleus. Transcriptional repressor which forms a core component of the circadian clock. The circadian clock, an internal time-keeping system, regulates various physiological processes through the generation of approximately 24 hour circadian rhythms in gene expression, which are translated into rhythms in metabolism and behavior. It is derived from the Latin roots 'circa' (about) and 'diem' (day) and acts as an important regulator of a wide array of physiological functions including metabolism, sleep, body temperature, blood pressure, endocrine, immune, cardiovascular, and renal function. Consists of two major components: the central clock, residing in the suprachiasmatic nucleus (SCN) of the brain, and the peripheral clocks that are present in nearly every tissue and organ system. Both the central and peripheral clocks can be reset by environmental cues, also known as Zeitgebers (German for 'timegivers'). The predominant Zeitgeber for the central clock is light, which is sensed by retina and signals directly to the SCN. The central clock entrains the peripheral clocks through neuronal and hormonal signals, body temperature and feeding-related cues, aligning all clocks with the external light/dark cycle. Circadian rhythms allow an organism to achieve temporal homeostasis with its environment at the molecular level by regulating gene expression to create a peak of protein expression once every 24 hours to control when a particular physiological process is most active with respect to the solar day. Transcription and translation of core clock components (CLOCK, NPAS2, BMAL1, BMAL2, PER1, PER2, PER3, CRY1 and CRY2) plays a critical role in rhythm generation, whereas delays imposed by post-translational modifications (PTMs) are important for determining the period (tau) of the rhythms (tau refers to the period of a rhythm and is the length, in time, of one complete cycle). A diurnal rhythm is synchronized with the day/night cycle, while the ultradian and infradian rhythms have a period shorter and longer than 24 hours, respectively. Disruptions in the circadian rhythms contribute to the pathology of cardiovascular diseases, cancer, metabolic syndromes and aging. A transcription/translation feedback loop (TTFL) forms the core of the molecular circadian clock mechanism. Transcription factors, CLOCK or NPAS2 and BMAL1 or BMAL2, form the positive limb of the feedback loop, act in the form of a heterodimer and activate the transcription of core clock genes and clock-controlled genes (involved in key metabolic processes), harboring E-box elements (5'-CACGTG-3') within their promoters. The core clock genes: PER1/2/3 and CRY1/2 which are transcriptional repressors form the negative limb of the feedback loop and interact with the CLOCK|NPAS2-BMAL1|BMAL2 heterodimer inhibiting its activity and thereby negatively regulating their own expression. This heterodimer also activates nuclear receptors NR1D1, NR1D2, RORA, RORB and RORG, which form a second feedback loop and which activate and repress BMAL1 transcription, respectively. CRY1 and CRY2 have redundant functions but also differential and selective contributions at least in defining the pace of the SCN circadian clock and its circadian transcriptional outputs. More potent transcriptional repressor in cerebellum and liver than CRY2, though more effective in lengthening the period of the SCN oscillator. On its side, CRY2 seems to play a critical role in tuning SCN circadian period by opposing the action of CRY1. With CRY2, is dispensable for circadian rhythm generation but necessary for the development of intercellular networks for rhythm synchrony. Capable of translocating circadian clock core proteins such as PER proteins to the nucleus. Interacts with CLOCK:BMAL1 independently of PER proteins and is found at CLOCK:BMAL1-bound sites, suggesting that CRY may act as a molecular gatekeeper to maintain CLOCK:BMAL1 in a poised and repressed state until the proper time for transcriptional activation. The polypeptide is Cryptochrome-1 (CRY1) (Sylvia borin (Garden warbler)).